We begin with the raw amino-acid sequence, 200 residues long: Cuticle protein 21.3 (200 aa).

Repeat copies occupy residues 98 to 101 (AAPA), 104 to 107 (AAPA), 116 to 119 (AAPA), 121 to 124 (AAPA), 133 to 136 (AAPA), 154 to 157 (AAPA), 166 to 169 (AAPA), 178 to 181 (AAPA), 184 to 187 (AAPA), and 196 to 199 (AAPA).

Component of the cuticle of migratory locust which contains more than 100 different structural proteins. The chain is Cuticle protein 21.3 from Locusta migratoria (Migratory locust).